The following is an 800-amino-acid chain: Phenylalanine--tRNA ligase beta subunit (800 aa).

Positions T39 to L154 constitute a tRNA-binding domain. Residues S408–S483 form the B5 domain. Positions 461, 467, 470, and 471 each coordinate Mg(2+). Positions P708 to R800 constitute an FDX-ACB domain.

Belongs to the phenylalanyl-tRNA synthetase beta subunit family. Type 1 subfamily. As to quaternary structure, tetramer of two alpha and two beta subunits. Mg(2+) serves as cofactor.

Its subcellular location is the cytoplasm. It carries out the reaction tRNA(Phe) + L-phenylalanine + ATP = L-phenylalanyl-tRNA(Phe) + AMP + diphosphate + H(+). This Staphylococcus epidermidis (strain ATCC 35984 / DSM 28319 / BCRC 17069 / CCUG 31568 / BM 3577 / RP62A) protein is Phenylalanine--tRNA ligase beta subunit.